A 488-amino-acid polypeptide reads, in one-letter code: UDP-N-acetylmuramate--L-alanine ligase (488 aa).

129–135 (GTHGKTT) lines the ATP pocket.

The protein belongs to the MurCDEF family.

It is found in the cytoplasm. It catalyses the reaction UDP-N-acetyl-alpha-D-muramate + L-alanine + ATP = UDP-N-acetyl-alpha-D-muramoyl-L-alanine + ADP + phosphate + H(+). It functions in the pathway cell wall biogenesis; peptidoglycan biosynthesis. Functionally, cell wall formation. This is UDP-N-acetylmuramate--L-alanine ligase from Chromohalobacter salexigens (strain ATCC BAA-138 / DSM 3043 / CIP 106854 / NCIMB 13768 / 1H11).